The chain runs to 84 residues: U-actitoxin-Avd8e (84 aa).

Positions 1 to 22 (MASARTLVLLLIGAVLMCQVSA) are cleaved as a signal peptide. The propeptide occupies 23-41 (DSELLNEILAAHMEEDMPE). One can recognise a ShKT domain in the interval 44–84 (CIDRYRSNICGSVIRPLDCTRRKSRMGRFARTNCKKLCGFC). Intrachain disulfides connect C44-C84, C53-C77, and C62-C81.

The protein belongs to the sea anemone 8 toxin family.

It is found in the secreted. Its subcellular location is the nematocyst. The polypeptide is U-actitoxin-Avd8e (Anemonia viridis (Snakelocks anemone)).